The sequence spans 227 residues: UPF0173 metal-dependent hydrolase Cmaq_1073 (227 aa).

It belongs to the UPF0173 family.

The polypeptide is UPF0173 metal-dependent hydrolase Cmaq_1073 (Caldivirga maquilingensis (strain ATCC 700844 / DSM 13496 / JCM 10307 / IC-167)).